The sequence spans 556 residues: Oxygen-dependent choline dehydrogenase (556 aa).

6–35 (DYIIIGAGSAGNVLAARLTEDPGVTVLLLE) lines the FAD pocket. The active-site Proton acceptor is His475.

This sequence belongs to the GMC oxidoreductase family. The cofactor is FAD.

It catalyses the reaction choline + A = betaine aldehyde + AH2. The catalysed reaction is betaine aldehyde + NAD(+) + H2O = glycine betaine + NADH + 2 H(+). The protein operates within amine and polyamine biosynthesis; betaine biosynthesis via choline pathway; betaine aldehyde from choline (cytochrome c reductase route): step 1/1. Involved in the biosynthesis of the osmoprotectant glycine betaine. Catalyzes the oxidation of choline to betaine aldehyde and betaine aldehyde to glycine betaine at the same rate. This chain is Oxygen-dependent choline dehydrogenase, found in Xanthomonas axonopodis pv. citri (strain 306).